A 554-amino-acid chain; its full sequence is Solute carrier family 22 member 1 (554 aa).

Residues 1 to 24 (MPSVDDVLEQVGEFGWFQKQAFLN) lie on the Cytoplasmic side of the membrane. The helical transmembrane segment at 25–45 (LCLTSVAFAPIYVGIVFLGFT) threads the bilayer. Residues 46 to 234 (PDHRCRSPGV…EFVGLGYRKT (189 aa)) are Extracellular-facing. N-linked (GlcNAc...) asparagine glycosylation is present at Asn-71. Residues 235-255 (VAILYQTAFSVGLVLLSGLAY) traverse the membrane as a helical segment. The Cytoplasmic segment spans residues 256–261 (AVPHWR). A helical transmembrane segment spans residues 262–282 (SLQLAVSLPIFLLLLCYWFVP). The short motif at 282 to 286 (PESPR) is the Proline-rich sequence element. The Extracellular segment spans residues 283 to 347 (ESPRWLLSQK…FRTQNLRKYT (65 aa)). Ser-333 is modified (phosphoserine). Residues 348 to 368 (FILMYLWFTSSVLYQGLIMHV) traverse the membrane as a helical segment. The Cytoplasmic portion of the chain corresponds to 369–376 (GATGGSLY). A helical transmembrane segment spans residues 377-397 (LDFLYSALVEFPAAFVILLII). The Extracellular portion of the chain corresponds to 398 to 402 (DRFGR). A helical membrane pass occupies residues 403–423 (LYLLAGSNLLAGAACFFMIFI). The Cytoplasmic segment spans residues 424-431 (SHDLHWLS). Residues 432–452 (IVAACIGRMGITIVFQMVCLV) traverse the membrane as a helical segment. At 453–464 (SAELYPTFIRNL) the chain is on the extracellular side. The chain crosses the membrane as a helical span at residues 465–485 (GVMVCSSLCDLGGVVAPFLVF). Residues 486–492 (RLTEVWR) are Cytoplasmic-facing. The chain crosses the membrane as a helical span at residues 493–513 (GLPLVLFAALGLVAGGMSLLL). The Extracellular portion of the chain corresponds to 514-554 (PETKGVALPETIEEVERLGRKAKPRDNMIYLQVKMPEPAGL).

This sequence belongs to the major facilitator (TC 2.A.1) superfamily. Organic cation transporter (TC 2.A.1.19) family. Phosphorylated.

It is found in the basolateral cell membrane. The protein localises to the apical cell membrane. Its subcellular location is the lateral cell membrane. It localises to the basal cell membrane. The protein resides in the cell membrane. The enzyme catalyses 1-methylnicotinamide(out) = 1-methylnicotinamide(in). It carries out the reaction dopamine(out) = dopamine(in). The catalysed reaction is serotonin(out) = serotonin(in). It catalyses the reaction (R)-adrenaline(out) = (R)-adrenaline(in). The enzyme catalyses (R)-noradrenaline(out) = (R)-noradrenaline(in). It carries out the reaction histamine(out) = histamine(in). The catalysed reaction is guanidine(out) = guanidine(in). It catalyses the reaction choline(out) = choline(in). The enzyme catalyses acetylcholine(in) = acetylcholine(out). It carries out the reaction thiamine(in) = thiamine(out). The catalysed reaction is spermidine(in) = spermidine(out). It catalyses the reaction agmatine(out) = agmatine(in). The enzyme catalyses putrescine(out) = putrescine(in). It carries out the reaction (R)-carnitine(in) = (R)-carnitine(out). The catalysed reaction is O-isobutanoyl-(R)-carnitine(in) = O-isobutanoyl-(R)-carnitine(out). It catalyses the reaction O-acetyl-(R)-carnitine(in) = O-acetyl-(R)-carnitine(out). The enzyme catalyses O-3-hydroxybutanoyl-(R)-carnitine(in) = O-3-hydroxybutanoyl-(R)-carnitine(out). It carries out the reaction O-propanoyl-(R)-carnitine(in) = O-propanoyl-(R)-carnitine(out). The catalysed reaction is O-butanoyl-(R)-carnitine(in) = O-butanoyl-(R)-carnitine(out). It catalyses the reaction O-2-methylbutanoyl-(R)-carnitine(in) = O-2-methylbutanoyl-(R)-carnitine(out). The enzyme catalyses O-3-methylbutanoyl-(R)-carnitine(in) = O-3-methylbutanoyl-(R)-carnitine(out). It carries out the reaction O-hexanoyl-(R)-carnitine(in) = O-hexanoyl-(R)-carnitine(out). The catalysed reaction is L-histidyl-L-proline diketopiperazine(in) = L-histidyl-L-proline diketopiperazine(out). It catalyses the reaction (R)-salsolinol(in) = (R)-salsolinol(out). The enzyme catalyses prostaglandin F2alpha(out) = prostaglandin F2alpha(in). It carries out the reaction prostaglandin E2(out) = prostaglandin E2(in). Its activity is regulated as follows. Phosphorylation of the transporter leads to changes in its substrate affinity, resulting in a regulation of the transport activity. In contrast with rat ortholog, ASP uptake is inhibited by protein kinase A (PKA) and C (PKC) activation. ASP uptake is also endogenously activated by calmodulin, the calmodulin-dependent kinase II and LCK tyrosine kinase. Inhibited by cGMP, most likely through a cGMP-binding protein that interacts with OCT1. Electrogenic voltage-dependent transporter that mediates the transport of a variety of organic cations such as endogenous bioactive amines, cationic drugs and xenobiotics. Functions as a pH- and Na(+)-independent, bidirectional transporter. Cation cellular uptake or release is driven by the electrochemical potential (i.e. membrane potential and concentration gradient) and substrate selectivity. Hydrophobicity is a major requirement for recognition in polyvalent substrates and inhibitors. Primarily expressed in the basolateral membrane of hepatocytes and proximal tubules and involved in the uptake and disposition of cationic compounds from the blood by hepatic and renal clearance. Most likely functions as an uptake carrier in enterocytes contributing to the intestinal elimination of organic cations from the systemic circulation. Transports endogenous monoamines such as N-1-methylnicotinamide (NMN), guanidine, neurotransmitters dopamine, serotonin, noradrenaline, adrenaline and histamine, and quaternary ammonium compound such as choline. Also transports natural polyamines such as spermidine, agmatine and putrescine at low affinity, but relatively high turnover. Involved in the hepatic and intestinal uptake of the vitamin B1/thiamine, hence regulating hepatic lipid and energy metabolism. Contributes to the influx and efflux of fatty acid carriers carnitines and acylcarnitines across the basolateral membrane of hepatocytes, from the liver to the systemic circulation and inversely and may be involved in regulating the systemic availability of hepatic acylcarnitines. Also capable of transporting non-amine endogenous compounds such as prostaglandin E2 (PGE2) and prostaglandin F2-alpha (PGF2-alpha). May contribute to the transport of cationic compounds in testes across the blood-testis-barrier. Also mediates the uptake of xenobiotics tributylmethylammonium (TBuMA), quinidine, N-methyl-quinine (NMQ), N-methyl-quinidine (NMQD) N-(4,4-azo-n-pentyl)-quinuclidine (APQ), azidoprocainamide methoiodide (AMP), N-(4,4-azo-n-pentyl)-21-deoxyajmalinium (APDA) and 4-(4-(dimethylamino)styryl)-N-methylpyridinium (ASP). The sequence is that of Solute carrier family 22 member 1 (SLC22A1) from Sus scrofa (Pig).